We begin with the raw amino-acid sequence, 107 residues long: UPF0473 protein LACR_0139 (107 aa).

Belongs to the UPF0473 family.

The protein is UPF0473 protein LACR_0139 of Lactococcus lactis subsp. cremoris (strain SK11).